A 316-amino-acid polypeptide reads, in one-letter code: tRNA dimethylallyltransferase (316 aa).

17–24 (GPTASGKT) is a binding site for ATP. 19–24 (TASGKT) is a substrate binding site. Interaction with substrate tRNA regions lie at residues 42-45 (DSAL), 166-170 (QRLSR), and 247-252 (RCVGYR).

The protein belongs to the IPP transferase family. As to quaternary structure, monomer. It depends on Mg(2+) as a cofactor.

The enzyme catalyses adenosine(37) in tRNA + dimethylallyl diphosphate = N(6)-dimethylallyladenosine(37) in tRNA + diphosphate. Catalyzes the transfer of a dimethylallyl group onto the adenine at position 37 in tRNAs that read codons beginning with uridine, leading to the formation of N6-(dimethylallyl)adenosine (i(6)A). This chain is tRNA dimethylallyltransferase, found in Klebsiella pneumoniae (strain 342).